The chain runs to 627 residues: MPRMALLDDIGCPDDVRKLTTKQAEDLAEEIRAFLIDKVSRTGGHLGPNLGVVELTIALHRVFDSPHDPIIFDTGHQSYVHKILTGRANGFEKLRQRGGLSGYPSRAESVHDWVENSHASASLSWAEGMAKGFLSQGEDRTVVAVIGDGALTGGMAWEALNSIADQQGLRLVIVVNDNGRSYTPTVGGLANQLAIIRTDPHYEEALDRMKRHVTDKPLGKQVFGLMHAAKAGVKDALIGNGIFSDLGIKYLGPVDGHDVLSVERALELAKRYGHPVIVHVMTTKGKGFAAAEANEEDHFHAVGRIDPVTGASLKASGGASWTQAFAGAMVELGERRPDIVGVTAAMLHPVGLAPFAARHPDRVLDVGIAEQHAVTSAAGMAAAGLHPVVALYSTFLNRAFDQLLMDAGLHHAGVTIVLDRAGITGTDGASHNGMWDMAMCGIVPGLMLSAPRDRQHLVSVLNEAVDIDDRPTVIRYSKDPIPDDIRIVTSHDGLDVLCDGPEDGILLVAHGQLCAEALAAVDQLDSPVRVVSPRWSLPVCGGLIEEAARARAVVSVEDGLVVSGLGSHLADALSQRGMWRPIRSLGIPQRYLDHDSRSAIMAELGLDSRGIADAVSQLVAQLDGEYS.

Thiamine diphosphate is bound by residues H76 and 117–119 (SHA). D148 serves as a coordination point for Mg(2+). Residues 149 to 150 (GA), N178, F288, and E370 each bind thiamine diphosphate. Residue N178 coordinates Mg(2+).

It belongs to the transketolase family. DXPS subfamily. In terms of assembly, homodimer. It depends on Mg(2+) as a cofactor. The cofactor is thiamine diphosphate.

It carries out the reaction D-glyceraldehyde 3-phosphate + pyruvate + H(+) = 1-deoxy-D-xylulose 5-phosphate + CO2. Its pathway is metabolic intermediate biosynthesis; 1-deoxy-D-xylulose 5-phosphate biosynthesis; 1-deoxy-D-xylulose 5-phosphate from D-glyceraldehyde 3-phosphate and pyruvate: step 1/1. Catalyzes the acyloin condensation reaction between C atoms 2 and 3 of pyruvate and glyceraldehyde 3-phosphate to yield 1-deoxy-D-xylulose-5-phosphate (DXP). The polypeptide is 1-deoxy-D-xylulose-5-phosphate synthase (Cutibacterium acnes (strain DSM 16379 / KPA171202) (Propionibacterium acnes)).